The primary structure comprises 396 residues: 1-deoxy-D-xylulose 5-phosphate reductoisomerase (396 aa).

NADPH contacts are provided by threonine 15, glycine 16, serine 17, isoleucine 18, glycine 41, and asparagine 130. Position 131 (lysine 131) interacts with 1-deoxy-D-xylulose 5-phosphate. Glutamate 132 contacts NADPH. Aspartate 155 lines the Mn(2+) pocket. Serine 156, glutamate 157, serine 181, and histidine 204 together coordinate 1-deoxy-D-xylulose 5-phosphate. Position 157 (glutamate 157) interacts with Mn(2+). Residue glycine 210 coordinates NADPH. Residues serine 217, asparagine 222, lysine 223, and glutamate 226 each contribute to the 1-deoxy-D-xylulose 5-phosphate site. Glutamate 226 serves as a coordination point for Mn(2+).

The protein belongs to the DXR family. It depends on Mg(2+) as a cofactor. The cofactor is Mn(2+).

It catalyses the reaction 2-C-methyl-D-erythritol 4-phosphate + NADP(+) = 1-deoxy-D-xylulose 5-phosphate + NADPH + H(+). The protein operates within isoprenoid biosynthesis; isopentenyl diphosphate biosynthesis via DXP pathway; isopentenyl diphosphate from 1-deoxy-D-xylulose 5-phosphate: step 1/6. In terms of biological role, catalyzes the NADPH-dependent rearrangement and reduction of 1-deoxy-D-xylulose-5-phosphate (DXP) to 2-C-methyl-D-erythritol 4-phosphate (MEP). The polypeptide is 1-deoxy-D-xylulose 5-phosphate reductoisomerase (Bifidobacterium longum subsp. infantis (strain ATCC 15697 / DSM 20088 / JCM 1222 / NCTC 11817 / S12)).